The sequence spans 34 residues: SCKVPFNECKYGADECCKGYVCSKRDGWCKYHIN.

3 cysteine pairs are disulfide-bonded: cysteine 2-cysteine 17, cysteine 9-cysteine 22, and cysteine 16-cysteine 29.

The protein belongs to the neurotoxin 10 (Hwtx-1) family. 50 (Jztz-F7) subfamily. Expressed by the venom gland.

It is found in the secreted. Functionally, probable ion channel inhibitor. This chain is Jingzhaotoxin F7-10.36, found in Chilobrachys guangxiensis (Chinese earth tiger tarantula).